Here is a 439-residue protein sequence, read N- to C-terminus: MALQNIGASNRDDAFYRYKMPRMMTKIEGRGNGIKTNVVNMVEIAKALGRPAAYTTKYFGCELGAQSKFDEKNGTSLVNGAHDTSKLAGLLENFIKKYVQCYGCGNPETEILITKTQMLQLKCAACGFLSDVDMRDKLTSFILKNPPEQKKSSKDKKSMRRAEKERLREGEAADEEMRKLKKEAASKKKAATTGTSKDKVSKKKDHSPPRSLSDENDQADSEEDDDDVQWQTDTSREAAEKRMKEQLSAVTAEMVMLSTVEEKKPVAEVKKAPEQVHENGNSKIPENAHEKLVNEIKELLSSGSSPTQLKTALASNSANPQEKMDALFSALFGGTGKGFAKEVIKKKKYLLALMMMQEEAGAPAQMGLLNGIESFCMKASAEAAKEVALVIKGLYDEDILDEDVIVEWYNKGVKSSPVLKNVTPFIEWLQNAESESEEE.

GTP is bound at residue 29 to 36; sequence GRGNGIKT. The tract at residues 143–245 is disordered; it reads LKNPPEQKKS…REAAEKRMKE (103 aa). Residues 147–186 are compositionally biased toward basic and acidic residues; sequence PEQKKSSKDKKSMRRAEKERLREGEAADEEMRKLKKEAAS. A compositionally biased stretch (acidic residues) spans 214–228; it reads DENDQADSEEDDDDV. Residue Thr-232 is modified to Phosphothreonine. Residues 234 to 245 show a composition bias toward basic and acidic residues; that stretch reads TSREAAEKRMKE. One can recognise a W2 domain in the interval 283–439; the sequence is KIPENAHEKL…QNAESESEEE (157 aa). Phosphoserine is present on residues Ser-434 and Ser-436.

Belongs to the eIF-2-beta/eIF-5 family.

Its function is as follows. Catalyzes the hydrolysis of GTP bound to the 40S ribosomal initiation complex (40S.mRNA.Met-tRNA[F].eIF-2.GTP) with the subsequent joining of a 60S ribosomal subunit resulting in the release of eIF-2 and the guanine nucleotide. The subsequent joining of a 60S ribosomal subunit results in the formation of a functional 80S initiation complex (80S.mRNA.Met-tRNA[F]). The polypeptide is Probable eukaryotic translation initiation factor 5-1 (Arabidopsis thaliana (Mouse-ear cress)).